Consider the following 2371-residue polypeptide: Highly reducing polyketide synthase ntnH (2371 aa).

In terms of domain architecture, Ketosynthase family 3 (KS3) spans 10-429 (PSPIAIVGIG…GANAHVILEG (420 aa)). Active-site for beta-ketoacyl synthase activity residues include Cys-180, His-316, and His-352. Residues 528–796 (FIFTGQGAQW…NSCLSRGADA (269 aa)) form a malonyl-CoA:ACP transacylase (MAT) domain region. The interval 858-986 (HELLGARVIG…GKVHPGNAST (129 aa)) is N-terminal hotdog fold. A dehydratase (DH) domain region spans residues 858-1142 (HELLGARVIG…GIRFRILENN (285 aa)). Residues 858–1145 (HELLGARVIG…FRILENNRSK (288 aa)) form the PKS/mFAS DH domain. The active-site Proton acceptor; for dehydratase activity is the His-890. The segment at 1001–1145 (VRGVISAKWY…FRILENNRSK (145 aa)) is C-terminal hotdog fold. Asp-1059 serves as the catalytic Proton donor; for dehydratase activity. The interval 1309 to 1456 (FFQLLGHNKK…FENVTAIMDQ (148 aa)) is methyltransferase (CMet) domain. The segment at 1669 to 1968 (GLLSSLQWQG…GHRPIGAICI (300 aa)) is enoyl reductase (ER) (ER) domain. The segment at 1993-2167 (SYVLIGGLGG…ASVIDLGVME (175 aa)) is ketoreductase (KR) domain. The region spanning 2280–2362 (EDETAVAEFL…DLGKLARSRI (83 aa)) is the Carrier domain. Ser-2322 is subject to O-(pantetheine 4'-phosphoryl)serine.

It participates in secondary metabolite biosynthesis; terpenoid biosynthesis. Highly reducing polyketide synthase; part of the gene cluster that mediates the biosynthesis of the meroterpenoids nectripenoids A and B, as well as cochliquninone D and isocochliquninone E. The pathway probably begins with the HR-PKS ntnH that catalyzes two chain-extension steps to form a reduced triketide, which then primes the SAT domain in the NR-PKS ntnG to initiate three more cycles of extension to give a linear hexaketide corresponding to the polyketide part of nectripenoids. The FAD-dependent monooxygenase ntnJ then performs an oxidative decarboxylation at C11 of the ntnH/ntnG product, via an electrophilic aromatic hydroxylation with concomitant ipso-decarboxylation. The membrane-bound polyprenyl transferase ntnF then introduces a farnesyl group before the FAD-dependent monooxygenase ntnK functions as the first epoxidase on terminal C12'-C13' olefin, followed by a second epoxidation on C7'-C8' catalyzed by ntnA. The terpene cyclase/mutase ntnI then initiates the sequential tricyclic ring formation through protonation of the terminal epoxide and catalyzes the regioselective and stereoselective 6/6/6-tricyclic ring formation. The cytochrome P450 monooxygenase ntnM may then hydroxylate C1'. This is Highly reducing polyketide synthase ntnH from Nectria sp.